A 276-amino-acid chain; its full sequence is Dermonecrotic toxin LarSicTox-alphaIB2c (276 aa).

The active site involves His5. Mg(2+)-binding residues include Glu25 and Asp27. The Nucleophile role is filled by His41. 2 cysteine pairs are disulfide-bonded: Cys45–Cys51 and Cys47–Cys190. Residue Asp85 coordinates Mg(2+). The N-linked (GlcNAc...) asparagine glycan is linked to Asn253.

It belongs to the arthropod phospholipase D family. Class II subfamily. Mg(2+) is required as a cofactor. Expressed by the venom gland.

The protein resides in the secreted. It carries out the reaction an N-(acyl)-sphingosylphosphocholine = an N-(acyl)-sphingosyl-1,3-cyclic phosphate + choline. It catalyses the reaction an N-(acyl)-sphingosylphosphoethanolamine = an N-(acyl)-sphingosyl-1,3-cyclic phosphate + ethanolamine. The enzyme catalyses a 1-acyl-sn-glycero-3-phosphocholine = a 1-acyl-sn-glycero-2,3-cyclic phosphate + choline. The catalysed reaction is a 1-acyl-sn-glycero-3-phosphoethanolamine = a 1-acyl-sn-glycero-2,3-cyclic phosphate + ethanolamine. Functionally, dermonecrotic toxins cleave the phosphodiester linkage between the phosphate and headgroup of certain phospholipids (sphingolipid and lysolipid substrates), forming an alcohol (often choline) and a cyclic phosphate. This toxin acts on sphingomyelin (SM). It may also act on ceramide phosphoethanolamine (CPE), lysophosphatidylcholine (LPC) and lysophosphatidylethanolamine (LPE), but not on lysophosphatidylserine (LPS), and lysophosphatidylglycerol (LPG). It acts by transphosphatidylation, releasing exclusively cyclic phosphate products as second products. Induces dermonecrosis, hemolysis, increased vascular permeability, edema, inflammatory response, and platelet aggregation. This chain is Dermonecrotic toxin LarSicTox-alphaIB2c, found in Loxosceles arizonica (Arizona brown spider).